The sequence spans 111 residues: Cytochrome c6 (111 aa).

A signal peptide spans 1-25 (MKRLLSLIFLVFVFFAVMLTPPALA). 4 residues coordinate heme c: Cys-39, Cys-42, His-43, and Met-83.

Belongs to the cytochrome c family. PetJ subfamily. In terms of assembly, monomer. Post-translationally, binds 1 heme c group covalently per subunit.

The protein localises to the cellular thylakoid lumen. Functions as an electron carrier between membrane-bound cytochrome b6-f and photosystem I in oxygenic photosynthesis. In Rippkaea orientalis (strain PCC 8801 / RF-1) (Cyanothece sp. (strain PCC 8801)), this protein is Cytochrome c6.